Consider the following 55-residue polypeptide: Large ribosomal subunit protein bL33 (55 aa).

It belongs to the bacterial ribosomal protein bL33 family.

This Proteus mirabilis (strain HI4320) protein is Large ribosomal subunit protein bL33.